Consider the following 216-residue polypeptide: Small ribosomal subunit protein uS5 (216 aa).

The disordered stretch occupies residues 1–55; the sequence is MDRKLENQKDLLNQDPKVELNSQSVAKNPLNSREVKPIQRRRPLRKNSRDKNSKP. Positions 20–31 are enriched in polar residues; it reads LNSQSVAKNPLN. The region spanning 57–120 is the S5 DRBM domain; the sequence is FEERVIAIHR…KDAQNRLVSV (64 aa).

Belongs to the universal ribosomal protein uS5 family. In terms of assembly, part of the 30S ribosomal subunit. Contacts proteins S4 and S8.

In terms of biological role, with S4 and S12 plays an important role in translational accuracy. Functionally, located at the back of the 30S subunit body where it stabilizes the conformation of the head with respect to the body. The polypeptide is Small ribosomal subunit protein uS5 (Mesomycoplasma hyopneumoniae (strain J / ATCC 25934 / NCTC 10110) (Mycoplasma hyopneumoniae)).